The following is a 193-amino-acid chain: Acyl carrier protein phosphodiesterase (193 aa).

It belongs to the AcpH family.

It catalyses the reaction holo-[ACP] + H2O = apo-[ACP] + (R)-4'-phosphopantetheine + H(+). Its function is as follows. Converts holo-ACP to apo-ACP by hydrolytic cleavage of the phosphopantetheine prosthetic group from ACP. This chain is Acyl carrier protein phosphodiesterase, found in Klebsiella pneumoniae subsp. pneumoniae (strain ATCC 700721 / MGH 78578).